The following is a 1266-amino-acid chain: Formin-like protein 13 (1266 aa).

Residues 9-193 (YRKPPDGLLE…QYVSRRNLVS (185 aa)) enclose the Phosphatase tensin-type domain. The active-site Phosphocysteine intermediate is the Cys-126. The region spanning 199 to 337 (DRALTMDCVI…FRVELLFSDM (139 aa)) is the C2 tensin-type domain. 4 disordered regions span residues 497–568 (KPLV…LQHS), 597–825 (KNLI…GKGR), 881–902 (SASA…PKPE), and 1210–1266 (QLEA…RTAP). The span at 529–538 (PPTPSPPHPV) shows a compositional bias: pro residues. Over residues 617–644 (EPSSKTTNSLLLSPQASPATPTNPSKTV) the composition is skewed to polar residues. 4 stretches are compositionally biased toward pro residues: residues 686–698 (LPRP…PPPM), 706–742 (VPPP…PPTP), 754–781 (PPAP…PPPL), and 806–815 (PNVPPTPALP). The 398-residue stretch at 829-1226 (VNLKNSPAKK…KNAAEKEKPK (398 aa)) folds into the FH2 domain. 3 stretches are compositionally biased toward basic and acidic residues: residues 889-902 (GKSR…PKPE), 1210-1248 (QLEA…EKTK), and 1255-1266 (EMSDRLKERTAP).

The protein belongs to the formin-like family. Class-II subfamily.

This Arabidopsis thaliana (Mouse-ear cress) protein is Formin-like protein 13 (FH13).